Here is an 87-residue protein sequence, read N- to C-terminus: UPF0367 protein SynWH7803_2240 (87 aa).

Belongs to the UPF0367 family.

The protein is UPF0367 protein SynWH7803_2240 of Synechococcus sp. (strain WH7803).